A 503-amino-acid polypeptide reads, in one-letter code: UPF0522 protein C (503 aa).

An N-terminal signal peptide occupies residues 1–18 (MKLFILIILSICLALVNS). N-linked (GlcNAc...) asparagine glycans are attached at residues N330, N337, and N370.

This sequence belongs to the UPF0522 family.

The protein localises to the secreted. This is UPF0522 protein C from Dictyostelium discoideum (Social amoeba).